The following is a 644-amino-acid chain: Exoribonuclease 2 (644 aa).

Residues 189-516 (REDLTALDFV…NHRLLKAVIK (328 aa)) form the RNB domain. The S1 motif domain occupies 561–643 (DTRFAAEIVD…ETRSIIARPV (83 aa)).

This sequence belongs to the RNR ribonuclease family. RNase II subfamily.

It is found in the cytoplasm. The catalysed reaction is Exonucleolytic cleavage in the 3'- to 5'-direction to yield nucleoside 5'-phosphates.. Its function is as follows. Involved in mRNA degradation. Hydrolyzes single-stranded polyribonucleotides processively in the 3' to 5' direction. The sequence is that of Exoribonuclease 2 from Escherichia coli O6:K15:H31 (strain 536 / UPEC).